A 362-amino-acid chain; its full sequence is Serine/threonine-protein kinase SBK2 (362 aa).

The span at 1–11 shows a compositional bias: basic and acidic residues; that stretch reads MPGKQSEDKPM. Positions 1–26 are disordered; it reads MPGKQSEDKPMEVSTVEDGGDEGLGG. Residues 62–330 form the Protein kinase domain; sequence YEEVRPLGQG…IKSYLGQPWK (269 aa). ATP-binding positions include 68 to 76 and Lys-91; that span reads LGQGRFGRV. Asp-183 (proton acceptor) is an active-site residue. Positions 329–362 are disordered; the sequence is WKQREGEAEELATELREDGWRGGQEAAKGEQPAC.

The protein belongs to the protein kinase superfamily. Ser/Thr protein kinase family. STKL subfamily.

It carries out the reaction L-seryl-[protein] + ATP = O-phospho-L-seryl-[protein] + ADP + H(+). The catalysed reaction is L-threonyl-[protein] + ATP = O-phospho-L-threonyl-[protein] + ADP + H(+). This is Serine/threonine-protein kinase SBK2 (Sbk2) from Mus musculus (Mouse).